Reading from the N-terminus, the 91-residue chain is Cell division protein CrgA (91 aa).

A compositionally biased stretch (polar residues) spans 1–24 (MPKSKITTEGSALPQSSSSATNRT). Positions 1-28 (MPKSKITTEGSALPQSSSSATNRTPVKI) are disordered. Transmembrane regions (helical) follow at residues 38 to 58 (IAIM…NYLA) and 68 to 88 (LGPW…LMTM).

It belongs to the CrgA family.

It is found in the cell membrane. In terms of biological role, involved in cell division. This Corynebacterium aurimucosum (strain ATCC 700975 / DSM 44827 / CIP 107346 / CN-1) (Corynebacterium nigricans) protein is Cell division protein CrgA.